The following is a 328-amino-acid chain: DNA-directed RNA polymerase subunit alpha (328 aa).

The tract at residues 1-232 is alpha N-terminal domain (alpha-NTD); sequence MSTQGFLKPR…DQISVFAALE (232 aa). The segment at 248–328 is alpha C-terminal domain (alpha-CTD); that stretch reads IDPVLLRPVD…NWPPLGLERP (81 aa).

It belongs to the RNA polymerase alpha chain family. Homodimer. The RNAP catalytic core consists of 2 alpha, 1 beta, 1 beta' and 1 omega subunit. When a sigma factor is associated with the core the holoenzyme is formed, which can initiate transcription.

It catalyses the reaction RNA(n) + a ribonucleoside 5'-triphosphate = RNA(n+1) + diphosphate. In terms of biological role, DNA-dependent RNA polymerase catalyzes the transcription of DNA into RNA using the four ribonucleoside triphosphates as substrates. This Bordetella bronchiseptica (strain ATCC BAA-588 / NCTC 13252 / RB50) (Alcaligenes bronchisepticus) protein is DNA-directed RNA polymerase subunit alpha.